A 308-amino-acid chain; its full sequence is uncharacterized protein (308 aa).

Residues 6–234 (LHIEGLDKKI…TEKAIIEVQP (229 aa)) enclose the ABC transporter domain. ATP is bound at residue 38–45 (GPNGSGKT).

The protein belongs to the ABC transporter superfamily.

This is an uncharacterized protein from Bacillus subtilis (strain 168).